A 484-amino-acid polypeptide reads, in one-letter code: Diaminopimelate decarboxylase 1, chloroplastic (484 aa).

Positions 1–28 are enriched in polar residues; that stretch reads MAAATQFLSQPSSLNPHQLKNQTSQRSR. The segment at 1–30 is disordered; it reads MAAATQFLSQPSSLNPHQLKNQTSQRSRSI. The transit peptide at 1–49 directs the protein to the chloroplast; it reads MAAATQFLSQPSSLNPHQLKNQTSQRSRSIPVLSLKSTLKPLKRLSVKA. Position 50 is an N-acetylalanine (A50). The residue at position 125 (K125) is an N6-(pyridoxal phosphate)lysine. Residues G304 and 340-343 contribute to the pyridoxal 5'-phosphate site; that span reads EPGR. Positions 343, 379, and 383 each coordinate substrate. The Proton donor role is filled by C411. Substrate contacts are provided by E412 and Y440. Residue Y440 participates in pyridoxal 5'-phosphate binding.

Belongs to the Orn/Lys/Arg decarboxylase class-II family. LysA subfamily. As to quaternary structure, homodimer. The cofactor is pyridoxal 5'-phosphate.

The protein resides in the plastid. Its subcellular location is the chloroplast. The catalysed reaction is meso-2,6-diaminopimelate + H(+) = L-lysine + CO2. The protein operates within amino-acid biosynthesis; L-lysine biosynthesis via DAP pathway; L-lysine from DL-2,6-diaminopimelate: step 1/1. In terms of biological role, specifically catalyzes the decarboxylation of meso-diaminopimelate (meso-DAP) to L-lysine. This chain is Diaminopimelate decarboxylase 1, chloroplastic (LYSA1), found in Arabidopsis thaliana (Mouse-ear cress).